The primary structure comprises 250 residues: tRNA (guanine-N(1)-)-methyltransferase (250 aa).

Residues Gly116 and Ile136–Leu141 contribute to the S-adenosyl-L-methionine site.

This sequence belongs to the RNA methyltransferase TrmD family. Homodimer.

The protein resides in the cytoplasm. The catalysed reaction is guanosine(37) in tRNA + S-adenosyl-L-methionine = N(1)-methylguanosine(37) in tRNA + S-adenosyl-L-homocysteine + H(+). In terms of biological role, specifically methylates guanosine-37 in various tRNAs. The protein is tRNA (guanine-N(1)-)-methyltransferase of Pseudomonas putida (strain GB-1).